A 417-amino-acid polypeptide reads, in one-letter code: Cell division protein FtsA (417 aa).

Belongs to the FtsA/MreB family. Self-interacts. Interacts with FtsZ.

It localises to the cell inner membrane. In terms of biological role, cell division protein that is involved in the assembly of the Z ring. May serve as a membrane anchor for the Z ring. In Pseudomonas aeruginosa (strain ATCC 15692 / DSM 22644 / CIP 104116 / JCM 14847 / LMG 12228 / 1C / PRS 101 / PAO1), this protein is Cell division protein FtsA.